The chain runs to 206 residues: Small ribosomal subunit protein uS4 (206 aa).

Residues 96–158 (GRLDNVVYRM…AKKQSRIKAA (63 aa)) enclose the S4 RNA-binding domain.

This sequence belongs to the universal ribosomal protein uS4 family. Part of the 30S ribosomal subunit. Contacts protein S5. The interaction surface between S4 and S5 is involved in control of translational fidelity.

In terms of biological role, one of the primary rRNA binding proteins, it binds directly to 16S rRNA where it nucleates assembly of the body of the 30S subunit. With S5 and S12 plays an important role in translational accuracy. The sequence is that of Small ribosomal subunit protein uS4 from Vibrio cholerae serotype O1 (strain ATCC 39541 / Classical Ogawa 395 / O395).